Here is a 1030-residue protein sequence, read N- to C-terminus: Tricorn protease (1030 aa).

A six-bladed beta propeller region spans residues 1-270; the sequence is MANLLQNPDI…DNVKSLDIGP (270 aa). A binds the substrate's C-terminus region spans residues 93–94; that stretch reads RR. A seven-bladed beta propeller region spans residues 286 to 635; sequence LEDFSMSPGD…EEEKSLNIDA (350 aa). The interval 641–712 is C-1; the sequence is NVKEDFAEMY…RTSHSYEMGG (72 aa). Catalysis depends on His-706, which acts as the Charge relay system. The PDZ-like stretch occupies residues 721-816; sequence RAGRIACDFK…SGFVDVLQDD (96 aa). The C-2 stretch occupies residues 817-1022; it reads RYIRYRAWVE…IEMVLADLEK (206 aa). 877-879 contacts substrate; sequence GGG. The active-site Nucleophile is Ser-926. 954–956 provides a ligand contact to substrate; the sequence is GIS. Glu-984 acts as the Charge relay system in catalysis.

Belongs to the peptidase S41B family. As to quaternary structure, part of the tricorn proteolytic complex.

The protein localises to the cytoplasm. Tricorn degrades oligopeptides in a sequential manner. The chain is Tricorn protease (tri) from Thermoplasma volcanium (strain ATCC 51530 / DSM 4299 / JCM 9571 / NBRC 15438 / GSS1).